The primary structure comprises 173 residues: MAIILGVDPGSRITGYGVIQCQGRQQLYLGSGCIRTSGDDLPLKLKQIFDGISEIIRQYQPDEFAIERVFLAKNADSALKLGQARGAAIVAATVANLPVAEYSATQIKSAVVGTGRAKKEQVQHMIQQLLKLPAAPQADAADALGVAVCHYHTNQSLVALSGRATTRTYGRYR.

Active-site residues include Asp8, Glu67, and Asp139. Asp8, Glu67, and Asp139 together coordinate Mg(2+).

It belongs to the RuvC family. As to quaternary structure, homodimer which binds Holliday junction (HJ) DNA. The HJ becomes 2-fold symmetrical on binding to RuvC with unstacked arms; it has a different conformation from HJ DNA in complex with RuvA. In the full resolvosome a probable DNA-RuvA(4)-RuvB(12)-RuvC(2) complex forms which resolves the HJ. The cofactor is Mg(2+).

The protein localises to the cytoplasm. The catalysed reaction is Endonucleolytic cleavage at a junction such as a reciprocal single-stranded crossover between two homologous DNA duplexes (Holliday junction).. In terms of biological role, the RuvA-RuvB-RuvC complex processes Holliday junction (HJ) DNA during genetic recombination and DNA repair. Endonuclease that resolves HJ intermediates. Cleaves cruciform DNA by making single-stranded nicks across the HJ at symmetrical positions within the homologous arms, yielding a 5'-phosphate and a 3'-hydroxyl group; requires a central core of homology in the junction. The consensus cleavage sequence is 5'-(A/T)TT(C/G)-3'. Cleavage occurs on the 3'-side of the TT dinucleotide at the point of strand exchange. HJ branch migration catalyzed by RuvA-RuvB allows RuvC to scan DNA until it finds its consensus sequence, where it cleaves and resolves the cruciform DNA. The chain is Crossover junction endodeoxyribonuclease RuvC from Shewanella oneidensis (strain ATCC 700550 / JCM 31522 / CIP 106686 / LMG 19005 / NCIMB 14063 / MR-1).